Reading from the N-terminus, the 94-residue chain is Large ribosomal subunit protein uL22 (94 aa).

This sequence belongs to the universal ribosomal protein uL22 family. In terms of assembly, part of the 50S ribosomal subunit.

Its function is as follows. This protein binds specifically to 23S rRNA; its binding is stimulated by other ribosomal proteins, e.g. L4, L17, and L20. It is important during the early stages of 50S assembly. It makes multiple contacts with different domains of the 23S rRNA in the assembled 50S subunit and ribosome. In terms of biological role, the globular domain of the protein is located near the polypeptide exit tunnel on the outside of the subunit, while an extended beta-hairpin is found that lines the wall of the exit tunnel in the center of the 70S ribosome. The chain is Large ribosomal subunit protein uL22 (rplV) from Tomato big bud phytoplasma.